Here is a 381-residue protein sequence, read N- to C-terminus: Heterogeneous nuclear rnp K-like protein 2 (381 aa).

The disordered stretch occupies residues 1–34; it reads MSQFFEAATPVAIPTNNTNGGSSDAGSAATGGAP. Residues 15–33 show a composition bias toward low complexity; that stretch reads TNNTNGGSSDAGSAATGGA. KH domains are found at residues 43–107, 156–221, and 258–326; these read TINH…IGDI, IGYV…LIEI, and NTRI…ESML. A disordered region spans residues 357-381; that stretch reads RSDSASFLEEKEEPQKNHDNKEEQS. Phosphoserine is present on residues S358, S360, and S362. The segment covering 369 to 381 has biased composition (basic and acidic residues); the sequence is EPQKNHDNKEEQS.

The protein belongs to the HEK2 family. Binds RNA. In terms of processing, phosphorylated by the plasma membrane-Anchored casein kinase YCK1. Phosphorylation at its C-terminus reduces its RNA-binding capacity.

Its subcellular location is the cytoplasm. The protein resides in the P-body. The protein localises to the nucleus. It is found in the chromosome. It localises to the telomere. In terms of biological role, RNA-binding protein involved in the correct localization of transcripts in the cell. RNA localization is a widespread mechanism for achieving localized protein synthesis. Required for the asymmetric localization to the daughter cell nucleus of the ASH1 transcript, coding for a specific repressor of transcription. Overexpression inhibits translation of the ASH1 transcript. Involved in the stability of transcripts, like the MTL1 mRNA. Involved in structural and functional organization of telomeric chromatin and regulates silencing at the HMR locus. This chain is Heterogeneous nuclear rnp K-like protein 2 (HEK2), found in Saccharomyces cerevisiae (strain RM11-1a) (Baker's yeast).